Consider the following 271-residue polypeptide: Dermonecrotic toxin LarSicTox-alphaIB1c (271 aa).

Residue histidine 3 is part of the active site. Mg(2+)-binding residues include glutamate 23 and aspartate 25. The active-site Nucleophile is the histidine 39. Intrachain disulfides connect cysteine 43/cysteine 49 and cysteine 45/cysteine 188. Aspartate 83 provides a ligand contact to Mg(2+). N-linked (GlcNAc...) asparagine glycosylation is present at asparagine 248.

The protein belongs to the arthropod phospholipase D family. Class II subfamily. The cofactor is Mg(2+). Expressed by the venom gland.

It localises to the secreted. The enzyme catalyses an N-(acyl)-sphingosylphosphocholine = an N-(acyl)-sphingosyl-1,3-cyclic phosphate + choline. It catalyses the reaction an N-(acyl)-sphingosylphosphoethanolamine = an N-(acyl)-sphingosyl-1,3-cyclic phosphate + ethanolamine. The catalysed reaction is a 1-acyl-sn-glycero-3-phosphocholine = a 1-acyl-sn-glycero-2,3-cyclic phosphate + choline. It carries out the reaction a 1-acyl-sn-glycero-3-phosphoethanolamine = a 1-acyl-sn-glycero-2,3-cyclic phosphate + ethanolamine. In terms of biological role, dermonecrotic toxins cleave the phosphodiester linkage between the phosphate and headgroup of certain phospholipids (sphingolipid and lysolipid substrates), forming an alcohol (often choline) and a cyclic phosphate. This toxin acts on sphingomyelin (SM). It may also act on ceramide phosphoethanolamine (CPE), lysophosphatidylcholine (LPC) and lysophosphatidylethanolamine (LPE), but not on lysophosphatidylserine (LPS), and lysophosphatidylglycerol (LPG). It acts by transphosphatidylation, releasing exclusively cyclic phosphate products as second products. Induces dermonecrosis, hemolysis, increased vascular permeability, edema, inflammatory response, and platelet aggregation. This Loxosceles arizonica (Arizona brown spider) protein is Dermonecrotic toxin LarSicTox-alphaIB1c.